A 483-amino-acid chain; its full sequence is MLTLDTLNVMLAVSEEGLIEEMIIALLASPQLAVFFEKFPRLKAAITDDVPRWREALRSRLKDARVPPELTEEVMCYQQSQLLSTPQFIVQLPQILDLLHRLNSPWAEQARQLVDANSTITSALHTLFLQRWRLSLIVQATTLNQQLLEEEREQLLSEVQERMTLSGQLEPILADNNTAAGRLWDMSAGQLKRGDYQLIVKYGEFLNEQPELKRLAEQLGRSREAKSIPRNDAQMETFRTMVREPATVPEQVDGLQQSDDILRLLPPELATLGITELEYEFYRRLVEKQLLTYRLHGESWREKMIERPVVHKDYDEQPRGPFIVCVDTSGSMGGFNEQCAKAFCLALMRIALAENRRCYIMLFSTEIVRYELSGPQGIEQAIRFLSQQFRGGTDLASCFRAIMERLQSREWFDADAVVISDFIAQRLPDDVTSKVKELQRIHQHRFHAVAMSAHGKPGIMRIFDHIWRFDTGMRSRLLRRWRR.

Belongs to the ViaA family. In terms of assembly, homodimer. Interacts with RavA.

Its subcellular location is the cytoplasm. In terms of biological role, component of the RavA-ViaA chaperone complex, which may act on the membrane to optimize the function of some of the respiratory chains. ViaA stimulates the ATPase activity of RavA. This chain is Regulatory protein ViaA, found in Escherichia coli O6:K15:H31 (strain 536 / UPEC).